Reading from the N-terminus, the 403-residue chain is Acetate kinase (403 aa).

Residue Asn7 coordinates Mg(2+). Lys14 lines the ATP pocket. Arg95 contacts substrate. The active-site Proton donor/acceptor is Asp152. Residues 212–216 (HLGNG), 286–288 (DMR), and 335–339 (GIGEN) contribute to the ATP site. Glu389 contributes to the Mg(2+) binding site.

Belongs to the acetokinase family. In terms of assembly, homodimer. Mg(2+) serves as cofactor. It depends on Mn(2+) as a cofactor.

Its subcellular location is the cytoplasm. The catalysed reaction is acetate + ATP = acetyl phosphate + ADP. It participates in metabolic intermediate biosynthesis; acetyl-CoA biosynthesis; acetyl-CoA from acetate: step 1/2. In terms of biological role, catalyzes the formation of acetyl phosphate from acetate and ATP. Can also catalyze the reverse reaction. The polypeptide is Acetate kinase (Desulfovibrio desulfuricans (strain ATCC 27774 / DSM 6949 / MB)).